Consider the following 580-residue polypeptide: uncharacterized protein (580 aa).

A PE-PPE domain is found at 300 to 525; it reads PGYTATFLET…LRVLVELGYD (226 aa).

Belongs to the mycobacterial PPE family.

This is an uncharacterized protein from Mycobacterium tuberculosis (strain CDC 1551 / Oshkosh).